Reading from the N-terminus, the 179-residue chain is Cytochrome b6-f complex iron-sulfur subunit (179 aa).

The helical transmembrane segment at leucine 21–isoleucine 43 threads the bilayer. The 102-residue stretch at glycine 61–phenylalanine 162 folds into the Rieske domain. Residues cysteine 108, histidine 110, cysteine 126, and histidine 129 each contribute to the [2Fe-2S] cluster site. Cysteines 113 and 128 form a disulfide.

Belongs to the Rieske iron-sulfur protein family. In terms of assembly, the 4 large subunits of the cytochrome b6-f complex are cytochrome b6, subunit IV (17 kDa polypeptide, PetD), cytochrome f and the Rieske protein, while the 4 small subunits are PetG, PetL, PetM and PetN. The complex functions as a dimer. [2Fe-2S] cluster is required as a cofactor.

It localises to the cellular thylakoid membrane. The enzyme catalyses 2 oxidized [plastocyanin] + a plastoquinol + 2 H(+)(in) = 2 reduced [plastocyanin] + a plastoquinone + 4 H(+)(out). Component of the cytochrome b6-f complex, which mediates electron transfer between photosystem II (PSII) and photosystem I (PSI), cyclic electron flow around PSI, and state transitions. The protein is Cytochrome b6-f complex iron-sulfur subunit of Trichodesmium erythraeum (strain IMS101).